Consider the following 419-residue polypeptide: UDP-N-acetylglucosamine 1-carboxyvinyltransferase (419 aa).

22 to 23 provides a ligand contact to phosphoenolpyruvate; sequence KN. R93 lines the UDP-N-acetyl-alpha-D-glucosamine pocket. Residue C117 is the Proton donor of the active site. Position 117 is a 2-(S-cysteinyl)pyruvic acid O-phosphothioketal (C117). UDP-N-acetyl-alpha-D-glucosamine-binding residues include D307 and I329.

This sequence belongs to the EPSP synthase family. MurA subfamily.

The protein localises to the cytoplasm. It carries out the reaction phosphoenolpyruvate + UDP-N-acetyl-alpha-D-glucosamine = UDP-N-acetyl-3-O-(1-carboxyvinyl)-alpha-D-glucosamine + phosphate. It functions in the pathway cell wall biogenesis; peptidoglycan biosynthesis. Cell wall formation. Adds enolpyruvyl to UDP-N-acetylglucosamine. The polypeptide is UDP-N-acetylglucosamine 1-carboxyvinyltransferase (Shewanella sp. (strain ANA-3)).